The primary structure comprises 519 residues: PTS system mannitol-specific EIICB component (519 aa).

At 1 to 30 the chain is on the cytoplasmic side; that stretch reads MAQTETQEKKGLGRKVQAFGSFLSSMIMPN. In terms of domain architecture, PTS EIIC type-2 spans 19 to 351; that stretch reads FGSFLSSMIM…MKFTKEPKQD (333 aa). A helical transmembrane segment spans residues 31–52; sequence IGAFIAWGFIAAIFIDNGWYPN. The Extracellular segment spans residues 53 to 56; sequence KELS. The helical transmembrane segment at 57 to 77 threads the bilayer; the sequence is QLAGPMITYLIPLLIAFSGGR. At 78–141 the chain is on the cytoplasmic side; the sequence is LIHDLRGGIV…QGFEMLFNNF (64 aa). Residues 142 to 163 traverse the membrane as a helical segment; the sequence is SAGILAFIMTILGFKLLAPIMQ. At 164–172 the chain is on the extracellular side; the sequence is FIMHILSVA. The chain crosses the membrane as a helical span at residues 173–193; the sequence is VEFLVHLHLLPIVSIIVEPAK. Topologically, residues 194–280 are cytoplasmic; that stretch reads ILFLNNAINH…VLMRPLLFIA (87 aa). Residues 281-300 traverse the membrane as a helical segment; sequence VILGGMTGVATYQATGFGFK. Topologically, residues 301–320 are extracellular; sequence SPASPGSFIVYCLNAPKGEF. Residues 321-342 form a helical membrane-spanning segment; it reads LHMVLGVFLAALVSFVVAALIM. The Cytoplasmic segment spans residues 343–519; that stretch reads KFTKEPKQDL…NNLKKDQDKA (177 aa). Residues 366-406 are disordered; that stretch reads KSSVSSKLTGATTGTGAAGVAANKANGEDQNEASSEDEEED. Positions 367–387 are enriched in low complexity; the sequence is SSVSSKLTGATTGTGAAGVAA. Residues 394–406 are compositionally biased toward acidic residues; sequence DQNEASSEDEEED. Residues 425 to 519 form the PTS EIIB type-2 domain; it reads DHVIFACDAG…NNLKKDQDKA (95 aa). Catalysis depends on cysteine 431, which acts as the Phosphocysteine intermediate; for EIIB activity. Cysteine 431 is modified (phosphocysteine; by EIIA).

In terms of assembly, homodimer.

It is found in the cell membrane. The catalysed reaction is D-mannitol(out) + N(pros)-phospho-L-histidyl-[protein] = D-mannitol 1-phosphate(in) + L-histidyl-[protein]. The phosphoenolpyruvate-dependent sugar phosphotransferase system (sugar PTS), a major carbohydrate active transport system, catalyzes the phosphorylation of incoming sugar substrates concomitantly with their translocation across the cell membrane. The enzyme II CmtAB PTS system is involved in D-mannitol transport. The sequence is that of PTS system mannitol-specific EIICB component (mtlA) from Staphylococcus haemolyticus (strain JCSC1435).